A 31-amino-acid polypeptide reads, in one-letter code: Photosystem II reaction center protein M (31 aa).

The helical transmembrane segment at 5–25 (ILAFIATALLILVPTAFLLII) threads the bilayer.

The protein belongs to the PsbM family. PSII is composed of 1 copy each of membrane proteins PsbA, PsbB, PsbC, PsbD, PsbE, PsbF, PsbH, PsbI, PsbJ, PsbK, PsbL, PsbM, PsbT, PsbX, PsbY, PsbZ, Psb30/Ycf12, at least 3 peripheral proteins of the oxygen-evolving complex and a large number of cofactors. It forms dimeric complexes.

It localises to the plastid membrane. Its function is as follows. One of the components of the core complex of photosystem II (PSII). PSII is a light-driven water:plastoquinone oxidoreductase that uses light energy to abstract electrons from H(2)O, generating O(2) and a proton gradient subsequently used for ATP formation. It consists of a core antenna complex that captures photons, and an electron transfer chain that converts photonic excitation into a charge separation. This subunit is found at the monomer-monomer interface. The polypeptide is Photosystem II reaction center protein M (Cuscuta reflexa (Southern Asian dodder)).